A 183-amino-acid chain; its full sequence is Inner membrane-spanning protein YciB (183 aa).

The next 5 helical transmembrane spans lie at 22–42 (IYAA…ITYL), 50–70 (MHLA…FFHD), 72–92 (AFIK…LIAS), 118–138 (VTWY…YIAF), and 148–168 (FKVF…VVYL).

The protein belongs to the YciB family.

Its subcellular location is the cell inner membrane. In terms of biological role, plays a role in cell envelope biogenesis, maintenance of cell envelope integrity and membrane homeostasis. The protein is Inner membrane-spanning protein YciB of Shewanella frigidimarina (strain NCIMB 400).